The chain runs to 269 residues: Formamidopyrimidine-DNA glycosylase (269 aa).

Proline 2 acts as the Schiff-base intermediate with DNA in catalysis. Glutamate 3 (proton donor) is an active-site residue. Lysine 57 (proton donor; for beta-elimination activity) is an active-site residue. Residues histidine 90, arginine 109, and lysine 150 each coordinate DNA. An FPG-type zinc finger spans residues 235-269 (QVYGRKGEPCRICGMPVVGTKHAQRATFYCRQCQK). Residue arginine 259 is the Proton donor; for delta-elimination activity of the active site.

This sequence belongs to the FPG family. In terms of assembly, monomer. Zn(2+) serves as cofactor.

The enzyme catalyses Hydrolysis of DNA containing ring-opened 7-methylguanine residues, releasing 2,6-diamino-4-hydroxy-5-(N-methyl)formamidopyrimidine.. It carries out the reaction 2'-deoxyribonucleotide-(2'-deoxyribose 5'-phosphate)-2'-deoxyribonucleotide-DNA = a 3'-end 2'-deoxyribonucleotide-(2,3-dehydro-2,3-deoxyribose 5'-phosphate)-DNA + a 5'-end 5'-phospho-2'-deoxyribonucleoside-DNA + H(+). In terms of biological role, involved in base excision repair of DNA damaged by oxidation or by mutagenic agents. Acts as a DNA glycosylase that recognizes and removes damaged bases. Has a preference for oxidized purines, such as 7,8-dihydro-8-oxoguanine (8-oxoG). Has AP (apurinic/apyrimidinic) lyase activity and introduces nicks in the DNA strand. Cleaves the DNA backbone by beta-delta elimination to generate a single-strand break at the site of the removed base with both 3'- and 5'-phosphates. This is Formamidopyrimidine-DNA glycosylase from Klebsiella pneumoniae subsp. pneumoniae (strain ATCC 700721 / MGH 78578).